A 124-amino-acid chain; its full sequence is uncharacterized protein (124 aa).

A dksA C4-type; degenerate zinc finger spans residues 73–94; the sequence is CEETGAPIPLAKLAVLPTARTA.

This is an uncharacterized protein from Bacillus subtilis (strain 168).